Consider the following 811-residue polypeptide: Transmembrane protease serine 6 (811 aa).

The interval 1–48 (MPRCFQLPCSTRMPTTEVPQAADGQGDAGDGEEAAEPEGKFKPPKNTK) is disordered. The Cytoplasmic portion of the chain corresponds to 1–59 (MPRCFQLPCSTRMPTTEVPQAADGQGDAGDGEEAAEPEGKFKPPKNTKRKNRDYVRFTP). The segment covering 8-18 (PCSTRMPTTEV) has biased composition (polar residues). The helical; Signal-anchor for type II membrane protein transmembrane segment at 60–80 (LLLVLAALVSAGVMLWYFLGY) threads the bilayer. Topologically, residues 81–811 (KAEVTVSQVY…VINWIQQVLT (731 aa)) are extracellular. Positions 86 to 209 (VSQVYSGSLR…EGLVILEASV (124 aa)) constitute an SEA domain. Residues Asn-138, Asn-184, Asn-216, Asn-338, Asn-433, and Asn-453 are each glycosylated (N-linked (GlcNAc...) asparagine). 2 consecutive CUB domains span residues 213–336 (VVLN…QDCQ) and 323–440 (FLLS…QISL). Cys-335 and Cys-366 are joined by a disulfide. LDL-receptor class A domains follow at residues 445–477 (VQVY…CDGI), 478–514 (KDCP…DRQP), and 518–555 (NGSD…DGQS). Cystine bridges form between Cys-458/Cys-470, Cys-464/Cys-480, Cys-474/Cys-489, Cys-491/Cys-503, Cys-497/Cys-516, Cys-510/Cys-525, Cys-531/Cys-543, Cys-538/Cys-557, Cys-551/Cys-566, and Cys-602/Cys-618. Asn-518 is a glycosylation site (N-linked (GlcNAc...) asparagine). Residues 577–811 (IVGGTVSSEG…VINWIQQVLT (235 aa)) form the Peptidase S1 domain. Active-site charge relay system residues include His-617 and Asp-668. 3 disulfide bridges follow: Cys-702–Cys-768, Cys-733–Cys-747, and Cys-758–Cys-787. The Charge relay system role is filled by Ser-762.

This sequence belongs to the peptidase S1 family. Interacts with HJV. The single-chain zymogen undergoes autoproteolytic processing. This results in TMPRSS6 shedding from the cell surface and conversion into an activated two-chains form which is released extracellularly. The process involves a trans-activation mechanism that requires TMPRSS6 oligomerization. Expressed at highest levels in adult mice liver, kidney and uterus. Also strongly expressed within the nasal cavity by olfactory epithelial cells. A weak, but detectable, signal in adult mice tissues analyzed including brain, lung, heart, kidney, spleen, muscle, intestine, thymus and pancreas. No signal in residual embryonic yolk sac, developing kidney tubules or in embryonic tissues analyzed including lung, heart, gastrointestinal tract and epithelium of the oral cavity.

It is found in the cell membrane. In terms of biological role, membrane-bound serine protease. Through the cleavage of cell surface HJV, a regulator of the expression of the iron absorption-regulating hormone hepicidin/HAMP, plays a role in iron homeostasis. This is Transmembrane protease serine 6 (Tmprss6) from Mus musculus (Mouse).